The chain runs to 214 residues: Pyridoxine/pyridoxamine 5'-phosphate oxidase (214 aa).

Substrate contacts are provided by residues 9–12 and lysine 67; that span reads RKNY. FMN contacts are provided by residues 62 to 67, 77 to 78, lysine 84, and glutamine 106; these read RMVLLK and YT. The substrate site is built by tyrosine 124, arginine 128, and serine 132. FMN contacts are provided by residues 141–142 and tryptophan 186; that span reads QS. Residue 192–194 participates in substrate binding; sequence RLH. Position 196 (arginine 196) interacts with FMN.

Belongs to the pyridoxamine 5'-phosphate oxidase family. As to quaternary structure, homodimer. The cofactor is FMN.

The catalysed reaction is pyridoxamine 5'-phosphate + O2 + H2O = pyridoxal 5'-phosphate + H2O2 + NH4(+). It catalyses the reaction pyridoxine 5'-phosphate + O2 = pyridoxal 5'-phosphate + H2O2. Its pathway is cofactor metabolism; pyridoxal 5'-phosphate salvage; pyridoxal 5'-phosphate from pyridoxamine 5'-phosphate: step 1/1. It functions in the pathway cofactor metabolism; pyridoxal 5'-phosphate salvage; pyridoxal 5'-phosphate from pyridoxine 5'-phosphate: step 1/1. Functionally, catalyzes the oxidation of either pyridoxine 5'-phosphate (PNP) or pyridoxamine 5'-phosphate (PMP) into pyridoxal 5'-phosphate (PLP). This Gloeothece citriformis (strain PCC 7424) (Cyanothece sp. (strain PCC 7424)) protein is Pyridoxine/pyridoxamine 5'-phosphate oxidase.